The primary structure comprises 200 residues: Isochorismatase family protein 2A (200 aa).

This sequence belongs to the isochorismatase family.

In Dictyostelium discoideum (Social amoeba), this protein is Isochorismatase family protein 2A.